Consider the following 325-residue polypeptide: Mitochondrial citrate transporter C (325 aa).

Solcar repeat units follow at residues 15-105 (ASPA…YKQM), 117-208 (KATF…LKAF), and 221-310 (LPSY…LKGK). 6 consecutive transmembrane segments (helical) span residues 21–41 (LIAGGGAGMMEALVCHPLDTI), 82–102 (GAVLGGIIPKMAIRFTSYESY), 121–141 (LAGLAAGVTEAVAVVNPMEVV), 187–207 (TALRQGTNQAANFTAYTELKA), 221–241 (LPSYQTTFIGLISGAVGPFSN), and 282–303 (FYKGITPRVMRVAPGQAVTFTV).

This sequence belongs to the mitochondrial carrier (TC 2.A.29) family.

The protein resides in the mitochondrion inner membrane. Mitochondrial transporter that does not mediate citrate export from mitochondria to cytoplasm. Its exact function has still to be determined. The chain is Mitochondrial citrate transporter C from Aspergillus niger (strain ATCC 1015 / CBS 113.46 / FGSC A1144 / LSHB Ac4 / NCTC 3858a / NRRL 328 / USDA 3528.7).